Here is a 138-residue protein sequence, read N- to C-terminus: Large ribosomal subunit protein bL17 (138 aa).

This sequence belongs to the bacterial ribosomal protein bL17 family. Part of the 50S ribosomal subunit. Contacts protein L32.

The protein is Large ribosomal subunit protein bL17 of Methylorubrum extorquens (strain CM4 / NCIMB 13688) (Methylobacterium extorquens).